The primary structure comprises 466 residues: Ribosome biogenesis protein YTM1 (466 aa).

A ubiquitin-like (UBL) domain region spans residues 8 to 95; that stretch reads IKINFFTNEE…EASLNLEYTR (88 aa). Residues 105 to 466 are sufficient for interaction with ERB1 and association with 66S pre-ribosomes; the sequence is SFNNDDWISS…QINKGSDITK (362 aa). 7 WD repeats span residues 120 to 159, 161 to 199, 214 to 253, 291 to 331, 333 to 372, 381 to 421, and 431 to 466; these read PLSA…EKQY, GHSG…NIED, GHKA…MTTI, GHSQ…CVDT, TTGY…TTTE, GHTN…SLYT, and KGQD…DITK.

Belongs to the WD repeat WDR12/YTM1 family. As to quaternary structure, component of the NOP7 complex, composed of ERB1, NOP7 and YTM1. The complex is held together by ERB1, which interacts with NOP7 via its N-terminal domain and with YTM1 via a high-affinity interaction between the seven-bladed beta-propeller domains of the 2 proteins. The NOP7 complex associates with the 66S pre-ribosome. Interacts (via UBL domain) with MDN1 (via VWFA/MIDAS domain).

The protein resides in the nucleus. The protein localises to the nucleolus. It localises to the nucleoplasm. Component of the NOP7 complex, which is required for maturation of the 25S and 5.8S ribosomal RNAs and formation of the 60S ribosome. This is Ribosome biogenesis protein YTM1 from Debaryomyces hansenii (strain ATCC 36239 / CBS 767 / BCRC 21394 / JCM 1990 / NBRC 0083 / IGC 2968) (Yeast).